A 228-amino-acid polypeptide reads, in one-letter code: Leucokinins (228 aa).

The first 18 residues, 1–18 (MAMLLQVALPLLAAVSWG), serve as a signal peptide directing secretion. The propeptide occupies 19–164 (WELNENDDSL…PRFSPVSAIQ (146 aa)). Residues 80 to 118 (EFSENNEAEDKSPTSAQNTQEHIPGNNFPPPAASNPPVN) form a disordered region. Glycine amide is present on residues G180 and G193. Residues 197–209 (NTGRVHRQPKVVI) constitute a propeptide that is removed on maturation. The residue at position 217 (G217) is a Glycine amide. Positions 221 to 228 (NQKDDNVF) are excised as a propeptide.

It localises to the secreted. Functionally, stimulates both fluid secretion by the Malpighian tubules and hindgut contractions. Depolarize the transepithelial voltage of the Malpighian tubules in concentrations of less than 10(-9) M and increase the frequency of hindgut contractions at concentrations above 10(-8) M. The protein is Leucokinins of Aedes aegypti (Yellowfever mosquito).